A 667-amino-acid chain; its full sequence is MVDKIERIKELVEILNKYSYDYYVLDNPSVSDKDYDKKYDELKLLEKETGVVLPYSPTLRIGDIVLDGFNKYTHKGKLWSLDKAQSLDEIKDWHNRNIKFVNDMRAQGEDLPDLKYIATKKFDGLTVNLTYNEEGMLEVSATRGNGEIGENVTAQVKTIKSIPLKLQENHDLFEVHGEAIMTQEAFEKYNSSADSPLKNLRNGAAGALRNLNVKETARRDLSAFFYDVGYKEGYQFKTYLEMMDFIKEKGLPVDDYLKVCVSIEDIKNEIDYIEKIRFDLNYDIDGLVIAIDDIRTRELLGYTVKFPKWAIAYKFEAQEATTKLVDVEWNVGRSGRIGPTAILEPVELAGVTVKRATLNNMDDIKRKGVRIGADVFIRRSNDVIPEIMGTLENTLENSEEIFPPTECPACGSHVVLNGAHYFCENTLSCKPQLVKTIVHYASRDAMNIAGFSEKTAEQLFEKLNIKSISDLYKLKKEDLINLEKFGDKKAENLLNAVEGSKECKLYSFIYALGIPNVGVKTAKDIVNKFKSIDGLKNATFEELVSVQDVGDIVAQDIIEFFKEEKVISTIDELLSLGVNPIFDEVKIVESIFKDKTVVATGTLQNYSRTEIKTKLESLGAKVSGSVSKKTDYVIAGESAGSKLTKAEELGVEVISEEEFEKMLGRES.

NAD(+) contacts are provided by residues 32–36 (DKDYD) and 80–81 (SL). Lys-121 functions as the N6-AMP-lysine intermediate in the catalytic mechanism. Positions 143, 178, and 314 each coordinate NAD(+). Zn(2+)-binding residues include Cys-407, Cys-410, Cys-423, and Cys-429. The BRCT domain occupies 587-667 (IVESIFKDKT…EFEKMLGRES (81 aa)).

It belongs to the NAD-dependent DNA ligase family. LigA subfamily. Mg(2+) is required as a cofactor. Requires Mn(2+) as cofactor.

The enzyme catalyses NAD(+) + (deoxyribonucleotide)n-3'-hydroxyl + 5'-phospho-(deoxyribonucleotide)m = (deoxyribonucleotide)n+m + AMP + beta-nicotinamide D-nucleotide.. DNA ligase that catalyzes the formation of phosphodiester linkages between 5'-phosphoryl and 3'-hydroxyl groups in double-stranded DNA using NAD as a coenzyme and as the energy source for the reaction. It is essential for DNA replication and repair of damaged DNA. The protein is DNA ligase of Clostridium botulinum (strain Alaska E43 / Type E3).